The primary structure comprises 327 residues: GMP reductase (327 aa).

Residue cysteine 175 is the Thioimidate intermediate of the active site. NADP(+) is bound at residue 204–227 (IIADGGIRTHGDIAKSIRFGASMV).

The protein belongs to the IMPDH/GMPR family. GuaC type 2 subfamily.

It catalyses the reaction IMP + NH4(+) + NADP(+) = GMP + NADPH + 2 H(+). Its function is as follows. Catalyzes the irreversible NADPH-dependent deamination of GMP to IMP. It functions in the conversion of nucleobase, nucleoside and nucleotide derivatives of G to A nucleotides, and in maintaining the intracellular balance of A and G nucleotides. This Oceanobacillus iheyensis (strain DSM 14371 / CIP 107618 / JCM 11309 / KCTC 3954 / HTE831) protein is GMP reductase.